Here is a 290-residue protein sequence, read N- to C-terminus: tRNA(Ile)-lysidine synthase (290 aa).

12-17 (SGGSDS) contacts ATP.

This sequence belongs to the tRNA(Ile)-lysidine synthase family.

The protein localises to the cytoplasm. It carries out the reaction cytidine(34) in tRNA(Ile2) + L-lysine + ATP = lysidine(34) in tRNA(Ile2) + AMP + diphosphate + H(+). Ligates lysine onto the cytidine present at position 34 of the AUA codon-specific tRNA(Ile) that contains the anticodon CAU, in an ATP-dependent manner. Cytidine is converted to lysidine, thus changing the amino acid specificity of the tRNA from methionine to isoleucine. This Mycoplasma genitalium (strain ATCC 33530 / DSM 19775 / NCTC 10195 / G37) (Mycoplasmoides genitalium) protein is tRNA(Ile)-lysidine synthase.